The chain runs to 622 residues: Meiotic expression up-regulated protein 25 (622 aa).

The polypeptide is Meiotic expression up-regulated protein 25 (meu25) (Schizosaccharomyces pombe (strain 972 / ATCC 24843) (Fission yeast)).